The chain runs to 616 residues: General alpha-glucoside permease (616 aa).

Over 1-115 (MKNIISLVSK…AALWSILVST (115 aa)) the chain is Cytoplasmic. Residues 15-27 (SKNEDKNISESSR) show a composition bias toward basic and acidic residues. The interval 15–40 (SKNEDKNISESSRDIVNQQEVFNTED) is disordered. The helical transmembrane segment at 116 to 136 (TLVMEGYDTALLSALYALPVF) threads the bilayer. Residues 137–160 (QRKFGTLNGEGSYEITSQWQIGLN) lie on the Extracellular side of the membrane. A helical transmembrane segment spans residues 161 to 181 (MCVLCGEMIGLQITTYMVEFM). Residues 182–191 (GNRYTMITAL) are Cytoplasmic-facing. Residues 192–212 (GLLTAYIFILYYCKSLAMIAV) form a helical membrane-spanning segment. Residues 213 to 214 (GQ) are Extracellular-facing. The chain crosses the membrane as a helical span at residues 215–235 (ILSAIPWGCFQSLAVTYASEV). Over 236-242 (CPLALRY) the chain is Cytoplasmic. The helical transmembrane segment at 243 to 263 (YMTSYSNICWLFGQIFASGIM) threads the bilayer. Residues 264–278 (KNSQENLGNSDLGYK) are Extracellular-facing. The helical transmembrane segment at 279-299 (LPFALQWIWPAPLMIGIFFAP) threads the bilayer. Over 300 to 373 (ESPWWLVRKD…VNGRRTRLAC (74 aa)) the chain is Cytoplasmic. Residues 374–394 (LTWVAQNSSGAVLLGYSTYFF) traverse the membrane as a helical segment. Topologically, residues 395–404 (ERAGMATDKA) are extracellular. The helical transmembrane segment at 405 to 425 (FTFSLIQYCLGLAGTLCSWVI) threads the bilayer. The Cytoplasmic segment spans residues 426–433 (SGRVGRWT). Residues 434–454 (ILTYGLAFQMVCLFIIGGMGF) form a helical membrane-spanning segment. Residues 455–466 (GSGSSASNGAGG) are Extracellular-facing. Residues 467-487 (LLLALSFFYNAGIGAVVYCIV) form a helical membrane-spanning segment. At 488-504 (AEIPSAELRTKTIVLAR) the chain is on the cytoplasmic side. Residues 505-525 (ICYNLMAVINAILTPYMLNVS) form a helical membrane-spanning segment. At 526–532 (DWNWGAK) the chain is on the extracellular side. A helical membrane pass occupies residues 533 to 553 (TGLYWGGFTAVTLAWVIIDLP). Residues 554-616 (ETTGRTFSEI…QRELNAADKC (63 aa)) lie on the Cytoplasmic side of the membrane. The disordered stretch occupies residues 587–616 (GKTQHDSLADESISQSSSIKQRELNAADKC). Residues 606–616 (KQRELNAADKC) show a composition bias toward basic and acidic residues.

It belongs to the major facilitator superfamily. Sugar transporter (TC 2.A.1.1) family.

The protein resides in the cell membrane. Functionally, high-affinity uptake of alpha-glucosides such as maltose, turanose, isomaltose, alpha-methylglucoside, maltotriose, palatinose, trehalose, melezitose and glucose. Acts with the concomitant transport of protons into the cell (symport system). Provides an alternative and minor mechanism for growth on trehalose carbon source by transporting trehalose into the cytoplasm for conversion to glucose by neutral trehalase NTH1. The chain is General alpha-glucoside permease from Saccharomyces cerevisiae (strain CEN.PK113-7D) (Baker's yeast).